We begin with the raw amino-acid sequence, 353 residues long: Nicotinate-nucleotide--dimethylbenzimidazole phosphoribosyltransferase (353 aa).

The Proton acceptor role is filled by glutamate 318.

It belongs to the CobT family.

It carries out the reaction 5,6-dimethylbenzimidazole + nicotinate beta-D-ribonucleotide = alpha-ribazole 5'-phosphate + nicotinate + H(+). It functions in the pathway nucleoside biosynthesis; alpha-ribazole biosynthesis; alpha-ribazole from 5,6-dimethylbenzimidazole: step 1/2. Catalyzes the synthesis of alpha-ribazole-5'-phosphate from nicotinate mononucleotide (NAMN) and 5,6-dimethylbenzimidazole (DMB). This is Nicotinate-nucleotide--dimethylbenzimidazole phosphoribosyltransferase from Geobacter metallireducens (strain ATCC 53774 / DSM 7210 / GS-15).